The chain runs to 178 residues: uncharacterized protein (178 aa).

The signal sequence occupies residues 1 to 23; sequence MTMFKKISVLFFTLILAGCSSWS.

This is an uncharacterized protein from Haemophilus influenzae (strain ATCC 51907 / DSM 11121 / KW20 / Rd).